The sequence spans 339 residues: Prepilin peptidase EppA (339 aa).

The next 10 membrane-spanning stretches (helical) occupy residues 3 to 23, 27 to 47, 48 to 68, 75 to 95, 99 to 119, 125 to 145, 146 to 166, 180 to 200, 204 to 224, and 319 to 339; these read LLNV…ITDI, IIPH…GYYY, FGFN…ILSI, VKLF…VFYI, ILYL…YKIL, DIIP…YFIN, IYEI…SIFV, LGYL…TYFI, VLLT…VIYA, and FVPF…LAII.

The protein belongs to the peptidase A24 family.

Its subcellular location is the cell membrane. In terms of biological role, peptidase that processes the N-terminus of prepilins. The chain is Prepilin peptidase EppA from Methanocaldococcus jannaschii (strain ATCC 43067 / DSM 2661 / JAL-1 / JCM 10045 / NBRC 100440) (Methanococcus jannaschii).